Reading from the N-terminus, the 95-residue chain is Large ribosomal subunit protein bL21 (95 aa).

Belongs to the bacterial ribosomal protein bL21 family. In terms of assembly, part of the 50S ribosomal subunit. Contacts protein L20.

This protein binds to 23S rRNA in the presence of protein L20. The sequence is that of Large ribosomal subunit protein bL21 from Prosthecochloris vibrioformis (Chlorobium vibrioforme).